Consider the following 198-residue polypeptide: Recombination protein RecR (198 aa).

The segment at 56-71 adopts a C4-type zinc-finger fold; sequence CGVCGNVDTSNPCGIC. The Toprim domain occupies 79 to 174; that stretch reads RSICVVEEVA…RVTQLAHGLP (96 aa).

Belongs to the RecR family.

Functionally, may play a role in DNA repair. It seems to be involved in an RecBC-independent recombinational process of DNA repair. It may act with RecF and RecO. This chain is Recombination protein RecR, found in Novosphingobium aromaticivorans (strain ATCC 700278 / DSM 12444 / CCUG 56034 / CIP 105152 / NBRC 16084 / F199).